Consider the following 266-residue polypeptide: Putative carbamate hydrolase RutD (266 aa).

The region spanning 14–119 is the AB hydrolase-1 domain; it reads PVVVLSAGLG…LVNGWLSLSP (106 aa).

Belongs to the AB hydrolase superfamily. Hydrolase RutD family.

The enzyme catalyses carbamate + 2 H(+) = NH4(+) + CO2. Its function is as follows. Involved in pyrimidine catabolism. May facilitate the hydrolysis of carbamate, a reaction that can also occur spontaneously. This is Putative carbamate hydrolase RutD from Klebsiella pneumoniae subsp. pneumoniae (strain ATCC 700721 / MGH 78578).